A 201-amino-acid polypeptide reads, in one-letter code: Recombination protein RecR (201 aa).

A C4-type zinc finger spans residues 60-75 (CSCCGNVDTIDPCTVC). A Toprim domain is found at 83 to 178 (SVIIVVEDVS…KITRLAHGVP (96 aa)).

The protein belongs to the RecR family.

Functionally, may play a role in DNA repair. It seems to be involved in an RecBC-independent recombinational process of DNA repair. It may act with RecF and RecO. The polypeptide is Recombination protein RecR (Agrobacterium fabrum (strain C58 / ATCC 33970) (Agrobacterium tumefaciens (strain C58))).